The sequence spans 790 residues: GATOR2 complex protein WDR24 (790 aa).

WD repeat units follow at residues 72–112, 118–158, 161–201, 205–245, 249–291, and 295–338; these read SLNL…RNKQ, EHKR…SVST, GQSE…RCER, AHNG…AKEM, QTIA…VPAA, and EHRD…VERA. S155 bears the Phosphoserine; by AMPK mark. Residues S470 and S496 each carry the phosphoserine modification. T581 is subject to Phosphothreonine. Residues S594 and S598 each carry the phosphoserine modification. A C4-type zinc finger spans residues 718-740; it reads NCSHCKRPMSSRGWVCDRCHRCA. Residues C719, C722, C733, C736, C743, C746, C757, C760, H762, H765, H768, C779, C783, H785, and C787 each contribute to the Zn(2+) site. An RING-type; atypical zinc finger spans residues 741 to 790; sequence SMCAVCHHVVKGLFVWCQGCSHGGHLQHIMKWLEGSSHCPAGCGHLCEYS.

The protein belongs to the WD repeat WDR24 family. As to quaternary structure, component of the GATOR2 subcomplex, composed of MIOS, SEC13, SEH1L, WDR24 and WDR59. The GATOR2 complex interacts with CASTOR1 and CASTOR2; the interaction is negatively regulated by arginine. The GATOR2 complex interacts with SESN1, SESN2 and SESN3; the interaction is negatively regulated by amino acids. SESN1, SESN2 and SESN3 convey leucine availability via direct interaction with SEH1L and WDR24. Post-translationally, phosphorylation at Ser-155 by AMPK in response to glucose deprivation inactivates WDR24 by promoting interaction with 14-3-3 proteins, such as YWHAG, preventing assembly of the GATOR2 complex. In terms of processing, autoubiquitinated; MIOS is required to prevent autoubiquitination.

The protein resides in the lysosome membrane. The catalysed reaction is S-ubiquitinyl-[E2 ubiquitin-conjugating enzyme]-L-cysteine + [acceptor protein]-L-lysine = [E2 ubiquitin-conjugating enzyme]-L-cysteine + N(6)-ubiquitinyl-[acceptor protein]-L-lysine.. It functions in the pathway protein modification; protein ubiquitination. Its activity is regulated as follows. The GATOR2 complex is negatively regulated by the upstream amino acid sensors CASTOR1 and SESN2, which sequester the GATOR2 complex in absence of amino acids. In the presence of abundant amino acids, GATOR2 is released from CASTOR1 and SESN2 and activated. Catalytic component of the GATOR2 complex, a multiprotein complex that acts as an activator of the amino acid-sensing branch of the mTORC1 signaling pathway. The GATOR2 complex indirectly activates mTORC1 through the inhibition of the GATOR1 subcomplex. GATOR2 probably acts as an E3 ubiquitin-protein ligase toward GATOR1. In the presence of abundant amino acids, the GATOR2 complex mediates ubiquitination of the NPRL2 core component of the GATOR1 complex, leading to GATOR1 inactivation. In the absence of amino acids, GATOR2 is inhibited, activating the GATOR1 complex. In addition to its role in regulation of the mTORC1 complex, promotes the acidification of lysosomes and facilitates autophagic flux. Within the GATOR2 complex, WDR24 constitutes the catalytic subunit that mediates 'Lys-6'-linked ubiquitination of NPRL2. The polypeptide is GATOR2 complex protein WDR24 (Homo sapiens (Human)).